The sequence spans 345 residues: Protein GAMETE CELL DEFECTIVE 1, mitochondrial (345 aa).

A mitochondrion-targeting transit peptide spans Met1 to Gly43. Residues Leu36 to Pro82 are disordered.

It localises to the mitochondrion. Essential for fertility (male and female gametophyte functions and development). Required for the integrity of female gametic mitochondria. Involved in embryo apical-basal patterning, and particularly dorsal-ventral patterning, during early embryogenesis, and endosperm free nucleus positioning and development as well as early endosperm development, probably by modulating the expression pattern of related genes (e.g. AL1, MYB3/AL2, CYP78A13/GE, PNH1, HAZ1, MPK6 and OSH1). Has function in triggering of endosperm programmed cell death (PCD) leading to syncytial endosperm cellularization and starchy endosperm cell maturation. Implicated in central vacuole dynamics necessary for microspore development leading to pollen production, and for pollen development and germination. This chain is Protein GAMETE CELL DEFECTIVE 1, mitochondrial, found in Oryza sativa subsp. indica (Rice).